The following is a 310-amino-acid chain: Quinolinate synthase (310 aa).

Residues histidine 27 and serine 44 each contribute to the iminosuccinate site. Cysteine 89 lines the [4Fe-4S] cluster pocket. Iminosuccinate contacts are provided by residues 115–117 (YVN) and serine 132. [4Fe-4S] cluster is bound at residue cysteine 175. Iminosuccinate-binding positions include 201 to 203 (HPE) and threonine 222. Position 267 (cysteine 267) interacts with [4Fe-4S] cluster.

Belongs to the quinolinate synthase family. Type 2 subfamily. Requires [4Fe-4S] cluster as cofactor.

It localises to the cytoplasm. The enzyme catalyses iminosuccinate + dihydroxyacetone phosphate = quinolinate + phosphate + 2 H2O + H(+). It functions in the pathway cofactor biosynthesis; NAD(+) biosynthesis; quinolinate from iminoaspartate: step 1/1. In terms of biological role, catalyzes the condensation of iminoaspartate with dihydroxyacetone phosphate to form quinolinate. The chain is Quinolinate synthase from Thermus thermophilus (strain ATCC BAA-163 / DSM 7039 / HB27).